The sequence spans 250 residues: Precorrin-4 C(11)-methyltransferase (250 aa).

Belongs to the precorrin methyltransferase family.

The enzyme catalyses precorrin-4 + S-adenosyl-L-methionine = precorrin-5 + S-adenosyl-L-homocysteine. Its pathway is cofactor biosynthesis; adenosylcobalamin biosynthesis; cob(II)yrinate a,c-diamide from precorrin-2 (aerobic route): step 4/10. Catalyzes the methylation of C-11 in precorrin-4 to form precorrin-5. The protein is Precorrin-4 C(11)-methyltransferase (cobM) of Pseudomonas aeruginosa (strain ATCC 15692 / DSM 22644 / CIP 104116 / JCM 14847 / LMG 12228 / 1C / PRS 101 / PAO1).